Reading from the N-terminus, the 221-residue chain is Charged multivesicular body protein 3 (221 aa).

Gly-2 carries N-myristoyl glycine lipidation. Residues Lys-22–Lys-54 are a coiled coil. Important for autoinhibitory function stretches follow at residues Val-59 to Ala-64 and Ile-168 to Leu-169. Residues Leu-144–Ser-221 adopt a coiled-coil conformation. The segment at Pro-181–Ser-221 is disordered. Residues Pro-199–Glu-211 are compositionally biased toward acidic residues. The MIT-interacting motif signature appears at Glu-200–Glu-210. Interaction with STAMBP regions lie at residues Glu-202–Glu-206 and Arg-220–Ser-221.

The protein belongs to the SNF7 family. In terms of assembly, probable core component of the endosomal sorting required for transport complex III (ESCRT-III). ESCRT-III components are thought to multimerize to form a flat lattice on the perimeter membrane of the endosome. Several assembly forms of ESCRT-III may exist that interact and act sequentially.

Its subcellular location is the cytoplasm. It is found in the cytosol. The protein resides in the membrane. It localises to the endosome. The protein localises to the late endosome membrane. Probable core component of the endosomal sorting required for transport complex III (ESCRT-III) which is involved in multivesicular bodies (MVBs) formation and sorting of endosomal cargo proteins into MVBs. MVBs contain intraluminal vesicles (ILVs) that are generated by invagination and scission from the limiting membrane of the endosome and mostly are delivered to lysosomes enabling degradation of membrane proteins, such as stimulated growth factor receptors, lysosomal enzymes and lipids. Involved in late stages of cytokinesis. Plays a role in endosomal sorting/trafficking of EGF receptor. The sequence is that of Charged multivesicular body protein 3 (chmp3) from Danio rerio (Zebrafish).